The sequence spans 148 residues: UPF0178 protein DP1304 (148 aa).

Belongs to the UPF0178 family.

The polypeptide is UPF0178 protein DP1304 (Desulfotalea psychrophila (strain LSv54 / DSM 12343)).